Consider the following 808-residue polypeptide: Glycerol-3-phosphate acyltransferase (808 aa).

An HXXXXD motif motif is present at residues 306–311 (HRSHMD).

The protein belongs to the GPAT/DAPAT family.

The protein resides in the cell inner membrane. It catalyses the reaction sn-glycerol 3-phosphate + an acyl-CoA = a 1-acyl-sn-glycero-3-phosphate + CoA. The protein operates within phospholipid metabolism; CDP-diacylglycerol biosynthesis; CDP-diacylglycerol from sn-glycerol 3-phosphate: step 1/3. This chain is Glycerol-3-phosphate acyltransferase, found in Vibrio parahaemolyticus serotype O3:K6 (strain RIMD 2210633).